Consider the following 137-residue polypeptide: Kunitz-type trypsin inhibitor alpha chain (137 aa).

The cysteines at positions 40 and 86 are disulfide-linked.

The protein belongs to the protease inhibitor I3 (leguminous Kunitz-type inhibitor) family. Heterodimer of an alpha and a beta chain linked by a disulfide bond.

Functionally, inhibition of trypsin. The chain is Kunitz-type trypsin inhibitor alpha chain from Neltuma juliflora (Mesquite).